The following is a 603-amino-acid chain: Geraniol synthase, chloroplastic (603 aa).

A chloroplast-targeting transit peptide spans 1–35 (MSSISQKVVIGLNKAAANNNLQNLDRRGFKTRCVS). 5 residues coordinate (2E)-geranyl diphosphate: arginine 319, aspartate 356, aspartate 360, arginine 497, and aspartate 500. Mg(2+) is bound by residues aspartate 356 and aspartate 360. Positions 356–360 (DDVYD) match the DDXXD motif motif. Positions 500, 504, and 508 each coordinate Mg(2+).

This sequence belongs to the terpene synthase family. Tpsb subfamily. In terms of assembly, monomer. The cofactor is Mg(2+). Mn(2+) is required as a cofactor.

It is found in the plastid. It localises to the chloroplast. The catalysed reaction is (2E)-geranyl diphosphate + H2O = (2E)-geraniol + diphosphate. It functions in the pathway secondary metabolite biosynthesis; terpenoid biosynthesis. Monoterpene synthase (mono-TPS) involved in the biosynthesis of monoterpenes natural products. Catalyzes the conversion of (2E)-geranyl diphosphate (GPP) into geraniol. This chain is Geraniol synthase, chloroplastic, found in Perilla frutescens var. hirtella (Perilla citriodora).